We begin with the raw amino-acid sequence, 62 residues long: Delta-theraphotoxin-Cg1a 3 (62 aa).

A signal peptide spans M1–A21. Positions T22 to R29 are excised as a propeptide. Cystine bridges form between C31-C46, C38-C51, and C45-C58.

It belongs to the neurotoxin 10 (Hwtx-1) family. 33 (Jztx-1) subfamily. As to expression, expressed by the venom gland.

The protein resides in the secreted. Moderately inhibits voltage-gated sodium channels and weakly inhibits voltage-gated potassium channel. Inhibits the inactivation of rat Nav1.2/SCN2A (IC(50)=870 nM), rat Nav1.3/SCN3A (IC(50)=845 nM), rat Nav1.4/SCN4A (IC(50)=339 nM), human Nav1.5/SCN5A (IC(50)=335 nM) and human Nav1.7/SCN9A sodium channels (IC(50)=348 nM). The toxin delays the inactivation of sodium channels without affecting the activation and steady-state inactivation kinetics in the physiological range of voltages. Site-directed mutagenesis of the sodium channel indicates that the toxin interacts with site 3 located at the extracellular S3-S4 linker of domain IV. On potassium channels, it inhibits activation of channels with an IC(50) of 8.05 uM through a voltage sensor-trapping mechanism. It increases muscle contraction in several assays (mouse phrenic nerve-diaphragm, toad heart, rat vas deferens) and is suggested to act both presynaptically and postsynaptically. The protein is Delta-theraphotoxin-Cg1a 3 of Chilobrachys guangxiensis (Chinese earth tiger tarantula).